The chain runs to 221 residues: Octanoyltransferase (221 aa).

Residues 14–202 (GVRPDTLWFL…MLGARNAPHP (189 aa)) enclose the BPL/LPL catalytic domain. Residues 54-61 (RGGLLTYH), 128-130 (SIG), and 141-143 (GFA) each bind substrate. The active-site Acyl-thioester intermediate is the Cys159. The interval 197–221 (RNAPHPPAPNLSSGDLGTGTRAGRT) is disordered.

Belongs to the LipB family.

The protein resides in the cytoplasm. It carries out the reaction octanoyl-[ACP] + L-lysyl-[protein] = N(6)-octanoyl-L-lysyl-[protein] + holo-[ACP] + H(+). It functions in the pathway protein modification; protein lipoylation via endogenous pathway; protein N(6)-(lipoyl)lysine from octanoyl-[acyl-carrier-protein]: step 1/2. In terms of biological role, catalyzes the transfer of endogenously produced octanoic acid from octanoyl-acyl-carrier-protein onto the lipoyl domains of lipoate-dependent enzymes. Lipoyl-ACP can also act as a substrate although octanoyl-ACP is likely to be the physiological substrate. The polypeptide is Octanoyltransferase (Frankia casuarinae (strain DSM 45818 / CECT 9043 / HFP020203 / CcI3)).